A 576-amino-acid polypeptide reads, in one-letter code: (E,E)-alpha-farnesene synthase (576 aa).

Arg-289, Asp-326, Asp-330, Arg-468, and Asn-471 together coordinate (2E,6E)-farnesyl diphosphate. Residues Asp-326 and Asp-330 each contribute to the Mg(2+) site. The short motif at 326-330 (DDVYD) is the DDXXD motif element. Mg(2+) contacts are provided by Asn-471, Thr-475, and Glu-479. K(+) contacts are provided by Asp-484 and Ser-487.

The protein belongs to the terpene synthase family. Tpsb subfamily. In terms of assembly, monomer. The cofactor is Mg(2+). It depends on Mn(2+) as a cofactor. Requires K(+) as cofactor.

Its subcellular location is the cytoplasm. It catalyses the reaction (2E,6E)-farnesyl diphosphate = (3E,6E)-alpha-farnesene + diphosphate. Its function is as follows. Sesquiterpene synthase catalyzing the production of (E,E)-alpha-farnesene, the predominant terpene produced during storage of fruits. Produces all six isomers (E,E)-alpha-farnesene, (Z,E)-alpha-farnesene, (E,Z)-alpha-farnesene, (Z,Z)-alpha-farnesene, (E)-beta-farnesene and (Z)-beta-farnesene from a mix of isomeric forms of the farnesyl diphosphate precursor. Able to convert geranyl diphosphate to the monoterpenes (E)-beta-ocimene, linalool and beta-myrcene. Also has a prenyltransferase activity producing alpha-farnesene directly from geranyl diphosphate and isoprenyl diphosphate. This chain is (E,E)-alpha-farnesene synthase (AFS1), found in Malus domestica (Apple).